The following is a 218-amino-acid chain: UPF0598 protein C8orf82 homolog (218 aa).

It belongs to the UPF0598 family.

In Rattus norvegicus (Rat), this protein is UPF0598 protein C8orf82 homolog.